Here is a 145-residue protein sequence, read N- to C-terminus: D-aminoacyl-tRNA deacylase (145 aa).

Positions 137 to 138 (GP) match the Gly-cisPro motif, important for rejection of L-amino acids motif.

Belongs to the DTD family. In terms of assembly, homodimer.

The protein resides in the cytoplasm. The catalysed reaction is glycyl-tRNA(Ala) + H2O = tRNA(Ala) + glycine + H(+). The enzyme catalyses a D-aminoacyl-tRNA + H2O = a tRNA + a D-alpha-amino acid + H(+). Its function is as follows. An aminoacyl-tRNA editing enzyme that deacylates mischarged D-aminoacyl-tRNAs. Also deacylates mischarged glycyl-tRNA(Ala), protecting cells against glycine mischarging by AlaRS. Acts via tRNA-based rather than protein-based catalysis; rejects L-amino acids rather than detecting D-amino acids in the active site. By recycling D-aminoacyl-tRNA to D-amino acids and free tRNA molecules, this enzyme counteracts the toxicity associated with the formation of D-aminoacyl-tRNA entities in vivo and helps enforce protein L-homochirality. The polypeptide is D-aminoacyl-tRNA deacylase (Lactobacillus acidophilus (strain ATCC 700396 / NCK56 / N2 / NCFM)).